The primary structure comprises 206 residues: N-(5'-phosphoribosyl)anthranilate isomerase (206 aa).

Belongs to the TrpF family.

The enzyme catalyses N-(5-phospho-beta-D-ribosyl)anthranilate = 1-(2-carboxyphenylamino)-1-deoxy-D-ribulose 5-phosphate. It participates in amino-acid biosynthesis; L-tryptophan biosynthesis; L-tryptophan from chorismate: step 3/5. The sequence is that of N-(5'-phosphoribosyl)anthranilate isomerase from Rubrobacter xylanophilus (strain DSM 9941 / JCM 11954 / NBRC 16129 / PRD-1).